Consider the following 396-residue polypeptide: Inositol polyphosphate multikinase (396 aa).

The segment covering 1–13 (MAAEPPALRLRPP) has biased composition (low complexity). Residues 1 to 22 (MAAEPPALRLRPPGSTGDSPPV) are disordered. Residue alanine 2 is modified to N-acetylalanine. Residue serine 19 is modified to Phosphoserine. Position 58 (lysine 58) interacts with ATP. Arginine 65 lines the substrate pocket. Residues 114-116 (EDV) and aspartate 127 each bind ATP. Residues lysine 129, 143 to 150 (KIQQQVSK), and glutamine 179 each bind substrate. A Nuclear localization signal motif is present at residues 300–310 (RHRKLYAKKHQ). Aspartate 365 contributes to the ATP binding site.

The protein belongs to the inositol phosphokinase (IPK) family. Mg(2+) serves as cofactor. Highly expressed in kidney, and at lower levels in hippocampus, brain cortex, cerebellum, heart and lung.

It localises to the nucleus. It carries out the reaction 1D-myo-inositol 1,4,5-trisphosphate + 2 ATP = 1D-myo-inositol 1,3,4,5,6-pentakisphosphate + 2 ADP + 2 H(+). The catalysed reaction is 1D-myo-inositol 1,3,4,6-tetrakisphosphate + ATP = 1D-myo-inositol 1,3,4,5,6-pentakisphosphate + ADP + H(+). It catalyses the reaction 1-octadecanoyl-2-(5Z,8Z,11Z,14Z)-eicosatetraenoyl-sn-glycero-3-phospho-1D-myo-inositol 4,5-bisphosphate + ATP = 1-octadecanoyl-2-(5Z,8Z,11Z,14Z-eicosatetraenoyl)-sn-glycero-3-phospho-(1D-myo-inositol 3,4,5-triphosphate) + ADP + H(+). The enzyme catalyses a 1,2-diacyl-sn-glycero-3-phospho-(1D-myo-inositol-4,5-bisphosphate) + ATP = a 1,2-diacyl-sn-glycero-3-phospho-(1D-myo-inositol-3,4,5-trisphosphate) + ADP + H(+). It carries out the reaction 1D-myo-inositol 1,4,5,6-tetrakisphosphate + ATP = 1D-myo-inositol 1,3,4,5,6-pentakisphosphate + ADP + H(+). It participates in phospholipid metabolism; phosphatidylinositol metabolism. Functionally, inositol phosphate kinase with a broad substrate specificity. Phosphorylates inositol 1,4,5-trisphosphate (Ins(1,4,5)P3) first to inositol 1,3,4,5-tetrakisphosphate and then to inositol 1,3,4,5,6-pentakisphosphate (Ins(1,3,4,5,6)P5). Phosphorylates inositol 1,3,4,6-tetrakisphosphate (Ins(1,3,4,6)P4). Phosphorylates inositol 1,4,5,6-tetrakisphosphate (Ins(1,4,5,6)P4). Phosphorylates glycero-3-phospho-1D-myo-inositol 4,5-bisphosphate to glycero-3-phospho-1D-myo-inositol 3,4,5-trisphosphate. Plays an important role in MLKL-mediated necroptosis via its role in the biosynthesis of inositol pentakisphosphate (InsP5) and inositol hexakisphosphate (InsP6). Binding of these highly phosphorylated inositol phosphates to MLKL mediates the release of an N-terminal auto-inhibitory region, leading to activation of the kinase. Essential for activated phospho-MLKL to oligomerize and localize to the cell membrane during necroptosis. Required for normal embryonic development, probably via its role in the biosynthesis of inositol 1,3,4,5,6-pentakisphosphate (Ins(1,3,4,5,6)P5) and inositol hexakisphosphate (InsP6). The chain is Inositol polyphosphate multikinase (Ipmk) from Rattus norvegicus (Rat).